Here is a 134-residue protein sequence, read N- to C-terminus: Natriuretic peptides B (134 aa).

Residues 1–26 form the signal peptide; that stretch reads MDPQTAPSRALLLLLFLHLAFLGGRS. O-linked (Xyl...) (chondroitin sulfate) serine glycosylation occurs at Ser41. Thr62 is a glycosylation site (O-linked (HexNAc...) threonine; Partial). Ser63 and Ser70 each carry an O-linked (HexNAc...) serine glycan. The O-linked (HexNAc...) threonine glycan is linked to Thr74. Ser79 is a glycosylation site (O-linked (HexNAc...) serine). Thr84 carries an O-linked (HexNAc...) threonine; Partial glycan. A glycan (O-linked (HexNAc...) threonine) is linked at Thr97. Cys112 and Cys128 form a disulfide bridge.

It belongs to the natriuretic peptide family. The precursor molecule is proteolytically cleaved by the endoproteases FURIN or CORIN at Arg-102 to produce brain natriuretic peptide 32 and NT-proBNP. This likely occurs after it has been secreted into the blood, either during circulation or in the target cells. CORIN also cleaves the precursor molecule at additional residues including Arg-99 and possibly Lys-105. In patients with heart failure, processing and degradation of natriuretic peptides B occurs but is delayed, possibly due to a decrease in enzyme level or activity of CORIN and DPP4. Post-translationally, undergoes further proteolytic cleavage by various proteases such as DPP4, MME and possibly FAP, to give rise to a variety of shorter peptides. Cleaved at Pro-104 by the prolyl endopeptidase FAP (seprase) activity (in vitro). Degraded by IDE. During IDE degradation, the resulting products initially increase the activation of NPR1 and can also stimulate NPR2 to produce cGMP before the fragments are completely degraded and inactivated by IDE (in vitro). In terms of processing, O-glycosylated on at least seven residues. In cardiomyocytes, glycosylation at Thr-97 is essential for the stability and processing of the extracellular natriuretic peptides B. Glycosylation, especially at Thr-97, may also be important for brain natriuretic peptide 32 stability and/or extracellular distribution. Glycosylation at Thr-97 appears to inhibit FURIN- or CORIN-mediated proteolytic processing, at least in HEK293 cells. Detected in the cardiac atria (at protein level). Detected in the kidney distal tubular cells (at protein level).

Its subcellular location is the secreted. Its function is as follows. Cardiac hormone that plays a key role in mediating cardio-renal homeostasis. May also function as a paracrine antifibrotic factor in the heart. Acts by specifically binding and stimulating NPR1 to produce cGMP, which in turn activates effector proteins that drive various biological responses. Involved in regulating the extracellular fluid volume and maintaining the fluid-electrolyte balance through natriuresis, diuresis, vasorelaxation, and inhibition of renin and aldosterone secretion. Binds the clearance receptor NPR3. May affect cardio-renal homeostasis. Able to promote the production of cGMP although its potency is very low compared to brain natriuretic peptide 32. Functionally, may have a role in cardio-renal homeostasis. Able to promote the production of cGMP. The sequence is that of Natriuretic peptides B (NPPB) from Homo sapiens (Human).